Here is an 874-residue protein sequence, read N- to C-terminus: MSAPVVIKALVASNTDIAEAILDAILSRPDEGFRLFCLCHNASPLHHVAGSLVELQLHLPKKRLTSQSRCGLVLTLHLPAEEAFPFLRGLTPLTADRLSTYLDRAGALRSLTPLVELLTLSAKKQPQGDARGRVAWLRPKIVGCLRRIYRVNISARWFISTFGSHEAQFVLVTAAYYFWGIPCTIETLAHLTELFTSESGQSLAAVTSLAELGEVFGSSAWAEQTEAFAHFAHEKLRRDSREIRAVARTIDAYRGRLPLASADLVRYVYLAHAQCFNEGTFKRYSQLTSMGEIGCLPSGGVVLPSLLDRGFAEHMRTYFTRETYLAEHVRVQQLKIRMEPPAPYTWDPDPDDGLMRAWAGLSVDVARELVELARWHADEGPTYPPTLQGFLCLAGQATCRGQWNPKEQFLPPTVLRRVQRLPVFLCHFADRHYFVMTAADPFSSHLAEVVSTPTNCRLPDTCLTRALSYTPVYYSQNSLSEQLFVSRHEYFNPRLPVCNLVLDLDLKIKGAPWSLEEIYDLCRTVRREVLRLMRRLGPVSRAHPVYFFKSACPPADPDNMEDVLPFCICTGKLGFRVITPLPRGHAIVGTSAVQGFVSVLQKLMGLTACLRRMRHKIKEIGAPLFDSGVYHAGRCIRLPHTYKVDRGGGLSRQLRLFVCHPEEEDKHSYVKNALNIQNLLHHSLHVGWPAPKTFCYHIADDGRDYLIQRTRETLPPTVENVCAMIEGHLGLDLVAWVSSCIWPSLMSTLATAVPEDKFPQFLHVTFEQTGPNLVQVCHARGRNFACLRHTHRASSKNVRVFLVLYYTSQAITVTFMSQCFAGRCGANQPTAHFSISVPASRIINRAEASQDSTTSQLARRRDRQDGSFSETLPN.

The CHC2-type zinc finger occupies 786–824 (CLRHTHRASSKNVRVFLVLYYTSQAITVTFMSQCFAGRC). The span at 848–857 (ASQDSTTSQL) shows a compositional bias: polar residues. The interval 848–874 (ASQDSTTSQLARRRDRQDGSFSETLPN) is disordered.

The protein belongs to the herpesviridae DNA primase family. Associates with the helicase and the primase-associated factor to form the helicase-primase factor.

Its subcellular location is the host nucleus. Its function is as follows. Essential component of the helicase/primase complex. Unwinds the DNA at the replication forks and generates single-stranded DNA for both leading and lagging strand synthesis. The primase initiates primer synthesis and thereby produces large amount of short RNA primers on the lagging strand that the polymerase elongates using dNTPs. The polypeptide is DNA primase (Epstein-Barr virus (strain B95-8) (HHV-4)).